The primary structure comprises 505 residues: Actin nucleation-promoting factor WASL (505 aa).

Position 2 is an N-acetylserine (Ser-2). Positions 34-141 constitute a WH1 domain; sequence LGKKCVTMSS…KAVTDLLGRR (108 aa). Disordered regions lie at residues 138–163 and 185–205; these read LGRR…ATVD and TKEK…DIGT. Over residues 186–198 the composition is skewed to basic residues; the sequence is KEKKKGKAKKKRL. The CRIB domain maps to 203 to 216; sequence IGTPSNFQHIGHVG. At Ser-242 the chain carries Phosphoserine; by TNK2. A Phosphotyrosine; by FAK1 and TNK2 modification is found at Tyr-256. 3 disordered regions span residues 266-406, 449-468, and 477-505; these read EAVK…AGSK, SVTD…SGIV, and KRSK…EWED. Composition is skewed to pro residues over residues 276-349, 356-365, and 372-391; these read APPP…PLPA, SGPPPPPPPL, and APPP…PPGL. Position 307 is an omega-N-methylarginine (Arg-307). WH2 domains are found at residues 405-422 and 433-450; these read SKAA…LKKV and GRDA…LKSV. Phosphoserine is present on residues Ser-484 and Ser-485. A compositionally biased stretch (acidic residues) spans 486 to 505; sequence DEDEDEDDDEDFEDDDEWED.

In terms of assembly, binds actin and the Arp2/3 complex. Interacts with CDC42. Interacts with FCHSD1. Interacts with FCHSD2. Binds to SH3 domains of GRB2. Interacts with the C-terminal SH3 domain of DNMBP. Interacts with SNX9. Interacts with the WW domains of PRPF40A/FBP11. Interacts with PTK2/FAK1. Interacts with PACSIN1, PACSIN2 and PACSIN3. Interacts with NOSTRIN. Binds to TNK2. Interacts with SNX33. Interacts with NONO (via second RRM domain); the interaction is direct. Component of a multiprotein complex with NONO and SFPQ; associates with the complex via direct interaction with NONO. Phosphorylation at Ser-242, Tyr-256, Ser-484 and Ser-485 enhances actin polymerization activity.

It localises to the cytoplasm. Its subcellular location is the cytoskeleton. The protein resides in the nucleus. Its function is as follows. Regulates actin polymerization by stimulating the actin-nucleating activity of the Arp2/3 complex. Involved in various processes, such as mitosis and cytokinesis, via its role in the regulation of actin polymerization. Together with CDC42, involved in the extension and maintenance of the formation of thin, actin-rich surface projections called filopodia. In addition to its role in the cytoplasm, also plays a role in the nucleus by regulating gene transcription, probably by promoting nuclear actin polymerization. Binds to HSF1/HSTF1 and forms a complex on heat shock promoter elements (HSE) that negatively regulates HSP90 expression. Plays a role in dendrite spine morphogenesis. The sequence is that of Actin nucleation-promoting factor WASL (WASL) from Bos taurus (Bovine).